Reading from the N-terminus, the 319-residue chain is Nuclear hormone receptor family member nhr-174 (319 aa).

The nuclear receptor DNA-binding region spans 7 to 81 (DPVCPVCEFP…AGMKRNLVRQ (75 aa)). 2 consecutive NR C4-type zinc fingers follow at residues 10-31 (CPVC…CGAC) and 47-63 (CEKK…CRAC). One can recognise an NR LBD domain in the interval 130 to 319 (EAEKDVSKIL…SMKKSRYLQF (190 aa)).

Belongs to the nuclear hormone receptor family.

Its subcellular location is the nucleus. Its function is as follows. Orphan nuclear receptor. The sequence is that of Nuclear hormone receptor family member nhr-174 (nhr-174) from Caenorhabditis elegans.